Reading from the N-terminus, the 388-residue chain is Succinate--CoA ligase [ADP-forming] subunit beta (388 aa).

Residues 9–244 enclose the ATP-grasp domain; the sequence is KQLFAEYGLP…PSQDDPREAH (236 aa). Residues lysine 46, 53–55, glutamate 99, threonine 102, and glutamate 107 each bind ATP; that span reads GRG. Positions 199 and 213 each coordinate Mg(2+). Residues asparagine 264 and 321–323 each bind substrate; that span reads GIV.

The protein belongs to the succinate/malate CoA ligase beta subunit family. As to quaternary structure, heterotetramer of two alpha and two beta subunits. Mg(2+) is required as a cofactor.

The enzyme catalyses succinate + ATP + CoA = succinyl-CoA + ADP + phosphate. It catalyses the reaction GTP + succinate + CoA = succinyl-CoA + GDP + phosphate. Its pathway is carbohydrate metabolism; tricarboxylic acid cycle; succinate from succinyl-CoA (ligase route): step 1/1. Succinyl-CoA synthetase functions in the citric acid cycle (TCA), coupling the hydrolysis of succinyl-CoA to the synthesis of either ATP or GTP and thus represents the only step of substrate-level phosphorylation in the TCA. The beta subunit provides nucleotide specificity of the enzyme and binds the substrate succinate, while the binding sites for coenzyme A and phosphate are found in the alpha subunit. This Pseudomonas fluorescens (strain SBW25) protein is Succinate--CoA ligase [ADP-forming] subunit beta.